Here is a 320-residue protein sequence, read N- to C-terminus: o-succinylbenzoate synthase (320 aa).

The active-site Proton donor is Lys-133. Asp-161, Glu-190, and Asp-213 together coordinate Mg(2+). Residue Lys-235 is the Proton acceptor of the active site.

Belongs to the mandelate racemase/muconate lactonizing enzyme family. MenC type 1 subfamily. The cofactor is a divalent metal cation.

It carries out the reaction (1R,6R)-6-hydroxy-2-succinyl-cyclohexa-2,4-diene-1-carboxylate = 2-succinylbenzoate + H2O. It functions in the pathway quinol/quinone metabolism; 1,4-dihydroxy-2-naphthoate biosynthesis; 1,4-dihydroxy-2-naphthoate from chorismate: step 4/7. The protein operates within quinol/quinone metabolism; menaquinone biosynthesis. In terms of biological role, converts 2-succinyl-6-hydroxy-2,4-cyclohexadiene-1-carboxylate (SHCHC) to 2-succinylbenzoate (OSB). The protein is o-succinylbenzoate synthase of Escherichia coli O45:K1 (strain S88 / ExPEC).